We begin with the raw amino-acid sequence, 180 residues long: Isopentenyl-diphosphate Delta-isomerase (180 aa).

Mn(2+) contacts are provided by histidine 29 and histidine 36. Cysteine 71 is a catalytic residue. Histidine 73 provides a ligand contact to Mn(2+). Glutamate 91 is a binding site for Mg(2+). Residues glutamate 118 and glutamate 120 each coordinate Mn(2+). Glutamate 120 is an active-site residue.

The protein belongs to the IPP isomerase type 1 family. It depends on Mg(2+) as a cofactor. Mn(2+) is required as a cofactor.

It localises to the cytoplasm. It carries out the reaction isopentenyl diphosphate = dimethylallyl diphosphate. It participates in isoprenoid biosynthesis; dimethylallyl diphosphate biosynthesis; dimethylallyl diphosphate from isopentenyl diphosphate: step 1/1. Functionally, catalyzes the 1,3-allylic rearrangement of the homoallylic substrate isopentenyl (IPP) to its highly electrophilic allylic isomer, dimethylallyl diphosphate (DMAPP). This is Isopentenyl-diphosphate Delta-isomerase from Kocuria rhizophila (strain ATCC 9341 / DSM 348 / NBRC 103217 / DC2201).